The following is a 144-amino-acid chain: Fluoride-specific ion channel FluC 1 (144 aa).

The next 4 helical transmembrane spans lie at 11–31 (LIYI…YYLG), 44–64 (LATL…TTYI), 74–94 (VITG…TFSV), and 107–127 (IAFL…GLGY). Na(+) is bound by residues Gly-84 and Thr-87.

This sequence belongs to the fluoride channel Fluc/FEX (TC 1.A.43) family.

It localises to the cell membrane. The catalysed reaction is fluoride(in) = fluoride(out). Na(+) is not transported, but it plays an essential structural role and its presence is essential for fluoride channel function. In terms of biological role, fluoride-specific ion channel. Important for reducing fluoride concentration in the cell, thus reducing its toxicity. In Bacillus cereus (strain ATCC 14579 / DSM 31 / CCUG 7414 / JCM 2152 / NBRC 15305 / NCIMB 9373 / NCTC 2599 / NRRL B-3711), this protein is Fluoride-specific ion channel FluC 1.